A 188-amino-acid polypeptide reads, in one-letter code: UPF0232 protein RHA1_ro03670 (188 aa).

Disordered regions lie at residues M1 to K20, E31 to G78, and P166 to G188. Over residues P7–E16 the composition is skewed to low complexity.

It belongs to the UPF0232 family.

This is UPF0232 protein RHA1_ro03670 from Rhodococcus jostii (strain RHA1).